A 583-amino-acid polypeptide reads, in one-letter code: MPIAYKNINQLWAYIFTETLKRLGLAYAVICPGSRSTPLAVAFAQQAPNIEAISILDERSAAFFALGIAKATNRPVAIVCTSGTAGANFYPAVIEAQESRVPLLLLTADRPPELRDCHSGQTIDQMKLYGSYPNWQAELALPVSDMGMLAYLRQTLVHSWYRMQAPTPGPVHLNIPFRDPLAPIPDGTDLSYLLAKFHPEEFFAGITDTTPLPHHSPLSIPPEWLQSQRGIIIAGVAQPQQPQEYCRAIARLSQTLQWPVLAEGLSPVRNYADFNPYLISTYDLILRNQQLATRLAPDMVIQIGDMPTSKELRNWIDTHQPRRWVIDPSDQNLDPLHGRTTHLRIRVEELGYQGVEEDKSSVSEYLQLWCNAETKVRVNVDETLDKMEDLVECKAAWLLSQMLPPETPLFIANSMPVRDVEFFWKPNNLRVRSHFNRGANGIDGTLSTALGISHRQQSSVLITGDLALLHDTNGFLIRNKFVGHLTIILINNNGGGIFEMLPIAKFEPPFEEFFGTPQDIDFAQLCTTYNVQHELIHSWVHLQQRLNPLPNTGIRVLELRTNRKIDAQWRRDNLSNFAADNII.

This sequence belongs to the TPP enzyme family. MenD subfamily. As to quaternary structure, homodimer. It depends on Mg(2+) as a cofactor. Requires Mn(2+) as cofactor. The cofactor is thiamine diphosphate.

It catalyses the reaction isochorismate + 2-oxoglutarate + H(+) = 5-enolpyruvoyl-6-hydroxy-2-succinyl-cyclohex-3-ene-1-carboxylate + CO2. Its pathway is quinol/quinone metabolism; 1,4-dihydroxy-2-naphthoate biosynthesis; 1,4-dihydroxy-2-naphthoate from chorismate: step 2/7. The protein operates within cofactor biosynthesis; phylloquinone biosynthesis. Catalyzes the thiamine diphosphate-dependent decarboxylation of 2-oxoglutarate and the subsequent addition of the resulting succinic semialdehyde-thiamine pyrophosphate anion to isochorismate to yield 2-succinyl-5-enolpyruvyl-6-hydroxy-3-cyclohexene-1-carboxylate (SEPHCHC). This chain is 2-succinyl-5-enolpyruvyl-6-hydroxy-3-cyclohexene-1-carboxylate synthase, found in Nostoc sp. (strain PCC 7120 / SAG 25.82 / UTEX 2576).